Reading from the N-terminus, the 592-residue chain is Putative phosphatidylinositol 4-kinase alpha-like protein P2 (592 aa).

Positions Glu-180–Leu-318 are pleckstrin homology (PH) domain conferring phosphoinositide binding specificity. Positions Lys-275–Arg-576 constitute a PI3K/PI4K catalytic domain. Residues Val-281–Glu-287 form a G-loop region. The segment at Gln-441 to Asn-449 is catalytic loop. Residues His-460–Thr-484 are activation loop.

Belongs to the PI3/PI4-kinase family. Type III PI4K subfamily.

This is Putative phosphatidylinositol 4-kinase alpha-like protein P2 (PI4KAP2) from Homo sapiens (Human).